The chain runs to 219 residues: Lipid transferase CIDEB (219 aa).

Residue threonine 18 is modified to Phosphothreonine. The CIDE-N domain occupies 34–110; it reads PQRPFRVCDH…VLEQGQSWSP (77 aa).

Belongs to the CIDE family. Interacts with DFFA. Interacts with DFFB; inhibited by DFFB. Interacts with APOB. Interacts with PREB/SEC12; facilitating loading of SCAP-SREBP into COPII vesicles. In terms of tissue distribution, highly enriched in the liver.

Its subcellular location is the lipid droplet. It localises to the endoplasmic reticulum membrane. The protein localises to the golgi apparatus. The protein resides in the cytoplasmic vesicle. It is found in the COPI-coated vesicle. Its function is as follows. Lipid transferase specifically expressed in hepatocytes, which promotes unilocular lipid droplet formation by mediating lipid droplet fusion. Lipid droplet fusion promotes their enlargement, restricting lipolysis and favoring lipid storage. Localizes on the lipid droplet surface, at focal contact sites between lipid droplets, and mediates atypical lipid droplet fusion by promoting directional net neutral lipid transfer from the smaller to larger lipid droplets. The transfer direction may be driven by the internal pressure difference between the contacting lipid droplet pair. Promotes lipid exchange and lipid droplet fusion in both small and large lipid droplet-containing hepatocytes. In addition to its role in lipid droplet fusion, also involved in cytoplasmic vesicle biogenesis and transport. Required for very-low-density lipoprotein (VLDL) lipidation and maturation. Probably involved in the biogenesis of VLDL transport vesicles by forming a COPII vesicle coat and facilitating the formation of endoplasmic reticulum-derived large vesicles. Also involved in sterol-regulated export of the SCAP-SREBP complex, composed of SCAP, SREBF1/SREBP1 and SREBF2/SREBP2, by promoting loading of SCAP-SREBP into COPII vesicles. May also activate apoptosis. The chain is Lipid transferase CIDEB from Mus musculus (Mouse).